A 128-amino-acid polypeptide reads, in one-letter code: Small ribosomal subunit protein uS9 (128 aa).

Residues 106–128 (PRVVERKKPGRPKARKRFQFSKR) form a disordered region. Over residues 113 to 128 (KPGRPKARKRFQFSKR) the composition is skewed to basic residues.

This sequence belongs to the universal ribosomal protein uS9 family.

The polypeptide is Small ribosomal subunit protein uS9 (Porphyromonas gingivalis (strain ATCC 33277 / DSM 20709 / CIP 103683 / JCM 12257 / NCTC 11834 / 2561)).